Consider the following 176-residue polypeptide: Inner membrane assembly complex subunit 17 (176 aa).

The transit peptide at 1–28 directs the protein to the mitochondrion; it reads MLRVLPTSFKSISTRSAFRACQLSPLTV. The Mitochondrial matrix segment spans residues 29-98; sequence YCPLKSSQGT…MSQEVSLKRF (70 aa). A helical transmembrane segment spans residues 99–121; it reads VRPLWVFFLMSSTVYLILHYVWW. Residues 122-176 are Mitochondrial intermembrane-facing; the sequence is KLEVVEKEKELQSHVESLEMELDQTLKSQNQNVSSSQNNGNNKTNDKPWYRKWFF. Residues 123–151 are a coiled coil; sequence LEVVEKEKELQSHVESLEMELDQTLKSQN. Low complexity predominate over residues 149-163; sequence SQNQNVSSSQNNGNN. Residues 149–168 are disordered; the sequence is SQNQNVSSSQNNGNNKTNDK.

It belongs to the INA17 family. In terms of assembly, component of the inner membrane assembly (INA) complex, composed of INA17 and INA22. Interacts with a subset of F(1)F(0)-ATP synthase subunits of the F(1)-domain and the peripheral stalk.

The protein localises to the mitochondrion inner membrane. Its function is as follows. Component of the INA complex (INAC) that promotes the biogenesis of mitochondrial F(1)F(0)-ATP synthase. INAC facilitates the assembly of the peripheral stalk and promotes the assembly of the catalytic F(1)-domain with the membrane-embedded F(0)-domain. The protein is Inner membrane assembly complex subunit 17 of Zygosaccharomyces rouxii (strain ATCC 2623 / CBS 732 / NBRC 1130 / NCYC 568 / NRRL Y-229).